Here is a 211-residue protein sequence, read N- to C-terminus: Thymidylate kinase (211 aa).

11–18 is a binding site for ATP; sequence GPDGAGKT.

The protein belongs to the thymidylate kinase family.

The enzyme catalyses dTMP + ATP = dTDP + ADP. Phosphorylation of dTMP to form dTDP in both de novo and salvage pathways of dTTP synthesis. In Streptococcus pyogenes serotype M18 (strain MGAS8232), this protein is Thymidylate kinase.